A 450-amino-acid polypeptide reads, in one-letter code: uncharacterized protein (450 aa).

A TRAM domain is found at 1-58 (MQKNQIVDLEITDLSYEAMGVAHLDGMTVFVNNALPGEIVSAKLLKVKKNFAFAKIEK). S-adenosyl-L-methionine-binding residues include Q280, Y309, E330, and D378. Catalysis depends on C405, which acts as the Nucleophile.

The protein belongs to the class I-like SAM-binding methyltransferase superfamily. RNA M5U methyltransferase family.

This is an uncharacterized protein from Lactobacillus johnsonii (strain CNCM I-12250 / La1 / NCC 533).